Reading from the N-terminus, the 74-residue chain is Small ribosomal subunit protein uS8c (74 aa).

Belongs to the universal ribosomal protein uS8 family. In terms of assembly, part of the 30S ribosomal subunit.

The protein localises to the plastid. It localises to the chloroplast. One of the primary rRNA binding proteins, it binds directly to 16S rRNA central domain where it helps coordinate assembly of the platform of the 30S subunit. This Oenothera ammophila (Evening primerose) protein is Small ribosomal subunit protein uS8c (rps8).